The chain runs to 242 residues: NAD-dependent protein deacylase 1 (242 aa).

A Deacetylase sirtuin-type domain is found at 1 to 242 (MDFKILKEKL…FAMKFEEKEG (242 aa)). Residue 21–40 (GAGISKESGIPTFRGEDGLW) coordinates NAD(+). The substrate site is built by Y65 and R68. Residue 99–102 (QNVD) participates in NAD(+) binding. H117 functions as the Proton acceptor in the catalytic mechanism. Zn(2+) is bound by residues C125, C128, C146, and C149. NAD(+) is bound by residues 186–188 (GTS) and E241.

It belongs to the sirtuin family. Class III subfamily. Zn(2+) is required as a cofactor.

It is found in the cytoplasm. The catalysed reaction is N(6)-acetyl-L-lysyl-[protein] + NAD(+) + H2O = 2''-O-acetyl-ADP-D-ribose + nicotinamide + L-lysyl-[protein]. The enzyme catalyses N(6)-succinyl-L-lysyl-[protein] + NAD(+) + H2O = 2''-O-succinyl-ADP-D-ribose + nicotinamide + L-lysyl-[protein]. NAD-dependent lysine deacetylase and desuccinylase that specifically removes acetyl and succinyl groups on target proteins. Modulates the activities of several proteins which are inactive in their acylated form. The chain is NAD-dependent protein deacylase 1 from Caldanaerobacter subterraneus subsp. tengcongensis (strain DSM 15242 / JCM 11007 / NBRC 100824 / MB4) (Thermoanaerobacter tengcongensis).